The following is a 484-amino-acid chain: MIDSTSTATATSKTVELNTNGSKTDASSENGTASNYPEGLWCFDEAMKMDPETTVKLQLDHLNKLRTVHGHARNFVKADNSRFVDEKGTEHLDLIGGVGVVTVGNNNQYVWDCLQKCFDAKLYMMGAISYRNLAAAFGRNMALLSPGQKLTRTWTATGGAEANEGVIKLIRLATRYKPNKKKFLSTLNSFHGKTTGAVFLGGKEKWQKYQSPAPFDVDYVPYGDAEALQVALSSGMYRSFIVEPIQGEGGVIVPPPGYLAKARELCTKYDTYLVLDEIQTGCGRTGKFWACEYENIIPDCIAFAKGFSGGLIPFAGYIATEELWNAAYNSLETAFLHTATYQENTLGLAAGVATIDYIVQNDLLSRCRKLGGIMFDRLNKLQTKFPHVMKDVRGRGMIVGIEFYPIPESVQEEFGEYYATPIVNDLADTYHVQVYCSLNNPSVFRFLPPLTIPEADLDEGLSAVESAVAKFDAKVKEAVAAKST.

Residues 1 to 14 are compositionally biased toward low complexity; sequence MIDSTSTATATSKT. Positions 1–32 are disordered; that stretch reads MIDSTSTATATSKTVELNTNGSKTDASSENGT. Over residues 15–32 the composition is skewed to polar residues; the sequence is VELNTNGSKTDASSENGT. Lysine 305 is modified (N6-(pyridoxal phosphate)lysine).

This sequence belongs to the class-III pyridoxal-phosphate-dependent aminotransferase family. Pyridoxal 5'-phosphate is required as a cofactor.

This is an uncharacterized protein from Schizosaccharomyces pombe (strain 972 / ATCC 24843) (Fission yeast).